Consider the following 577-residue polypeptide: Acyl-coenzyme A synthetase ACSM2A, mitochondrial (577 aa).

A mitochondrion-targeting transit peptide spans 1 to 46 (MHWLRKVQGLCTLWGTQMSSRTLYINSRQLVSLQWGHQEVPAKFNF). Glutamine 139 provides a ligand contact to CoA. Residues 221–229 (TSGTSGLPK), 359–364 (ESYGQT), aspartate 446, and arginine 461 each bind ATP. Residue threonine 364 participates in substrate binding. A CoA-binding site is contributed by 469 to 471 (SGY). Arginine 472 is a binding site for substrate. Arginine 501 lines the CoA pocket. Serine 513 is modified (phosphoserine). CoA-binding positions include lysine 532 and 540–542 (YPR). An ATP-binding site is contributed by lysine 557.

The protein belongs to the ATP-dependent AMP-binding enzyme family. As to quaternary structure, monomer. Requires Mg(2+) as cofactor. It depends on Mn(2+) as a cofactor.

The protein localises to the mitochondrion. The enzyme catalyses a medium-chain fatty acid + ATP + CoA = a medium-chain fatty acyl-CoA + AMP + diphosphate. It catalyses the reaction benzoate + ATP + CoA = benzoyl-CoA + AMP + diphosphate. It carries out the reaction hexanoate + ATP + CoA = hexanoyl-CoA + AMP + diphosphate. The catalysed reaction is butanoate + ATP + CoA = butanoyl-CoA + AMP + diphosphate. The enzyme catalyses octanoate + ATP + CoA = octanoyl-CoA + AMP + diphosphate. It catalyses the reaction decanoate + ATP + CoA = decanoyl-CoA + AMP + diphosphate. Catalyzes the activation of fatty acids by CoA to produce an acyl-CoA, the first step in fatty acid metabolism. Capable of activating medium-chain fatty acids (e.g. butyric (C4) to decanoic (C10) acids), and certain carboxylate-containing xenobiotics, e.g. benzoate. In Homo sapiens (Human), this protein is Acyl-coenzyme A synthetase ACSM2A, mitochondrial (ACSM2A).